The sequence spans 151 residues: 3-hydroxyacyl-[acyl-carrier-protein] dehydratase FabZ (151 aa).

The active site involves His57.

The protein belongs to the thioester dehydratase family. FabZ subfamily.

It localises to the cytoplasm. It catalyses the reaction a (3R)-hydroxyacyl-[ACP] = a (2E)-enoyl-[ACP] + H2O. Involved in unsaturated fatty acids biosynthesis. Catalyzes the dehydration of short chain beta-hydroxyacyl-ACPs and long chain saturated and unsaturated beta-hydroxyacyl-ACPs. In Tolumonas auensis (strain DSM 9187 / NBRC 110442 / TA 4), this protein is 3-hydroxyacyl-[acyl-carrier-protein] dehydratase FabZ.